The chain runs to 130 residues: MAENQYYGTGRRKSSAARVFIKPGSGKIVINQRSLEQYFGRETARMVVRQPLELVDMVEKLDLYITVKGGGISGQAGAIRHGITRALMEYDESLRSELRKAGFVTRDARQVERKKVGLRKARRRPQFSKR.

The segment at 111–130 (VERKKVGLRKARRRPQFSKR) is disordered. The segment covering 116 to 130 (VGLRKARRRPQFSKR) has biased composition (basic residues).

Belongs to the universal ribosomal protein uS9 family.

The protein is Small ribosomal subunit protein uS9 of Enterobacter sp. (strain 638).